The primary structure comprises 448 residues: Biotin carboxylase (448 aa).

The Biotin carboxylation domain occupies 1-445 (MLEKVVIANR…NIHYLEKKLG (445 aa)). ATP contacts are provided by residues lysine 116, lysine 159, 165-166 (GG), 201-204 (EKYL), histidine 209, and histidine 236. The ATP-grasp domain occupies 120 to 317 (IKAMKKAGVP…LVKEQLRIAA (198 aa)). Lysine 238 lines the hydrogencarbonate pocket. The ATP site is built by glutamate 276 and glutamate 288. Glutamate 276, glutamate 288, and asparagine 290 together coordinate Mg(2+). Glutamate 276, glutamate 288, and asparagine 290 together coordinate Mn(2+). Hydrogencarbonate contacts are provided by arginine 292, valine 295, and arginine 338. Arginine 292 is a catalytic residue. Arginine 338 provides a ligand contact to biotin.

In terms of assembly, acetyl-CoA carboxylase is a heterohexamer of biotin carboxyl carrier protein, biotin carboxylase and the two subunits of carboxyl transferase in a 2:2 complex. Mg(2+) serves as cofactor. Requires Mn(2+) as cofactor.

The enzyme catalyses N(6)-biotinyl-L-lysyl-[protein] + hydrogencarbonate + ATP = N(6)-carboxybiotinyl-L-lysyl-[protein] + ADP + phosphate + H(+). Its pathway is lipid metabolism; malonyl-CoA biosynthesis; malonyl-CoA from acetyl-CoA: step 1/1. This protein is a component of the acetyl coenzyme A carboxylase complex; first, biotin carboxylase catalyzes the carboxylation of the carrier protein and then the transcarboxylase transfers the carboxyl group to form malonyl-CoA. This is Biotin carboxylase (accC) from Haemophilus influenzae (strain ATCC 51907 / DSM 11121 / KW20 / Rd).